The primary structure comprises 309 residues: uncharacterized protein (309 aa).

Disordered regions lie at residues 1–94 and 286–309; these read IGEV…RQQI and HTRN…PPRG. A compositionally biased stretch (pro residues) spans 30 to 43; that stretch reads PAQPPSPAPTPSRT. A compositionally biased stretch (basic and acidic residues) spans 58–67; that stretch reads RSKTPDKRSA. Pro residues predominate over residues 297-309; sequence KNTPPPLEDPPRG.

This is an uncharacterized protein from Homo sapiens (Human).